A 356-amino-acid chain; its full sequence is Histidinol-phosphate aminotransferase (356 aa).

The residue at position 208 (lysine 208) is an N6-(pyridoxal phosphate)lysine.

The protein belongs to the class-II pyridoxal-phosphate-dependent aminotransferase family. Histidinol-phosphate aminotransferase subfamily. As to quaternary structure, homodimer. The cofactor is pyridoxal 5'-phosphate.

It catalyses the reaction L-histidinol phosphate + 2-oxoglutarate = 3-(imidazol-4-yl)-2-oxopropyl phosphate + L-glutamate. It participates in amino-acid biosynthesis; L-histidine biosynthesis; L-histidine from 5-phospho-alpha-D-ribose 1-diphosphate: step 7/9. In Lactococcus lactis subsp. cremoris (strain MG1363), this protein is Histidinol-phosphate aminotransferase.